The sequence spans 477 residues: Cysteine--tRNA ligase (477 aa).

C30 is a binding site for Zn(2+). A 'HIGH' region motif is present at residues 32-42 (PTVYDYNHIGH). Positions 209, 234, and 238 each coordinate Zn(2+). The 'KMSKS' region signature appears at 267–271 (KMSKS). ATP is bound at residue K270.

It belongs to the class-I aminoacyl-tRNA synthetase family. The cofactor is Zn(2+).

The protein localises to the cytoplasm. It catalyses the reaction tRNA(Cys) + L-cysteine + ATP = L-cysteinyl-tRNA(Cys) + AMP + diphosphate. In Staphylothermus marinus (strain ATCC 43588 / DSM 3639 / JCM 9404 / F1), this protein is Cysteine--tRNA ligase.